The primary structure comprises 356 residues: Isocitrate dehydrogenase [NAD] subunit 1, mitochondrial (356 aa).

Residues R106, R137, and D224 each coordinate substrate. Mg(2+) is bound at residue D224.

The protein belongs to the isocitrate and isopropylmalate dehydrogenases family. Octamer of two non-identical subunits IDH1 and IDH2. It depends on Mg(2+) as a cofactor. Mn(2+) is required as a cofactor.

Its subcellular location is the mitochondrion. The catalysed reaction is D-threo-isocitrate + NAD(+) = 2-oxoglutarate + CO2 + NADH. Its function is as follows. Performs an essential role in the oxidative function of the citric acid cycle. Also binds RNA; specifically to the 5'-untranslated leaders of mitochondrial mRNAs. In Schizosaccharomyces pombe (strain 972 / ATCC 24843) (Fission yeast), this protein is Isocitrate dehydrogenase [NAD] subunit 1, mitochondrial (idh1).